Reading from the N-terminus, the 147-residue chain is Hemoglobin anodic subunit beta (147 aa).

A Globin domain is found at 2–147; sequence EWTEDERTAI…VTSALARQYH (146 aa). H63 and H92 together coordinate heme b.

This sequence belongs to the globin family. As to quaternary structure, heterotetramer of two alpha chains and two beta chains. Red blood cells.

Its function is as follows. Involved in oxygen transport from gills to the various peripheral tissues. The sequence is that of Hemoglobin anodic subunit beta (hbb1) from Anguilla anguilla (European freshwater eel).